The chain runs to 1025 residues: Dihydropyrimidine dehydrogenase [NADP(+)] (1025 aa).

Residues 1 to 3 (MAP) constitute a propeptide that is removed on maturation. The 32-residue stretch at 69-100 (ERGALREAMRCLKCADAPCQKSCPTHLDIKSF) folds into the 4Fe-4S ferredoxin-type 1 domain. [4Fe-4S] cluster contacts are provided by C79, C82, C87, and C91. V129 contributes to the FAD binding site. 4 residues coordinate [4Fe-4S] cluster: C130, C136, C140, and Q156. Residues 194 to 198 (GAGPA), 218 to 226 (EKQEYVGGL), R235, and L261 contribute to the FAD site. NADP(+) contacts are provided by residues 340 to 343 (AGDT), 364 to 365 (RK), and R371. Position 384 is an N6-acetyllysine (K384). Residues 437 to 439 (AFG) and 481 to 487 (DIVGMAN) contribute to the NADP(+) site. 480–489 (GDIVGMANTT) is a binding site for FAD. Residues S550 and 574 to 575 (KT) each bind FMN. Residues N609 and 668–670 (NLS) each bind substrate. C671 functions as the Proton acceptor in the catalytic mechanism. FMN is bound at residue K709. Position 736–737 (736–737 (NT)) interacts with substrate. Residues G767, 793–795 (TGG), and 816–817 (CS) each bind FMN. 2 consecutive 4Fe-4S ferredoxin-type domains span residues 944 to 976 (VVAV…FDPE) and 978 to 1007 (HLPT…MVSR). Positions 953, 956, 959, 963, 986, 989, 992, and 996 each coordinate [4Fe-4S] cluster.

Belongs to the dihydropyrimidine dehydrogenase family. Homodimer. FAD serves as cofactor. Requires FMN as cofactor. The cofactor is [4Fe-4S] cluster.

The protein resides in the cytoplasm. The catalysed reaction is 5,6-dihydrouracil + NADP(+) = uracil + NADPH + H(+). It catalyses the reaction 5,6-dihydrothymine + NADP(+) = thymine + NADPH + H(+). The protein operates within amino-acid biosynthesis; beta-alanine biosynthesis. With respect to regulation, inactivated by 5-iodouracil. In terms of biological role, involved in pyrimidine base degradation. Catalyzes the reduction of uracil and thymine. The protein is Dihydropyrimidine dehydrogenase [NADP(+)] (DPYD) of Sus scrofa (Pig).